A 325-amino-acid chain; its full sequence is ATP-dependent (S)-NAD(P)H-hydrate dehydratase (325 aa).

Positions 9–315 (LLKKVYNMVP…EHVHTAFLNV (307 aa)) constitute a YjeF C-terminal domain. Residues glycine 119 and 172–178 (NVVEFGR) each bind (6S)-NADPHX. Residues 211 to 215 (KGAKD) and 230 to 239 (GGLKRSGGQG) contribute to the ATP site. Position 240 (aspartate 240) interacts with (6S)-NADPHX.

The protein belongs to the NnrD/CARKD family. Mg(2+) is required as a cofactor.

It localises to the cytoplasm. The catalysed reaction is (6S)-NADHX + ATP = ADP + phosphate + NADH + H(+). It carries out the reaction (6S)-NADPHX + ATP = ADP + phosphate + NADPH + H(+). Its function is as follows. Catalyzes the dehydration of the S-form of NAD(P)HX at the expense of ATP, which is converted to ADP. Together with NAD(P)HX epimerase, which catalyzes the epimerization of the S- and R-forms, the enzyme allows the repair of both epimers of NAD(P)HX, a damaged form of NAD(P)H that is a result of enzymatic or heat-dependent hydration. This Phaeosphaeria nodorum (strain SN15 / ATCC MYA-4574 / FGSC 10173) (Glume blotch fungus) protein is ATP-dependent (S)-NAD(P)H-hydrate dehydratase.